Consider the following 526-residue polypeptide: Tyrosine 2,3-aminomutase (526 aa).

The active-site Proton donor/acceptor is Tyr41. His71 serves as a coordination point for substrate. The 5-imidazolinone (Ala-Gly) cross-link spans 130–132 (ASG). At Ser131 the chain carries 2,3-didehydroalanine (Ser). Substrate is bound by residues Asn183 and Arg288.

It belongs to the TAL/TAM family. As to quaternary structure, homotetramer; dimer of dimers. Contains an active site 4-methylidene-imidazol-5-one (MIO), which is formed autocatalytically by cyclization and dehydration of residues Ala-Ser-Gly.

The enzyme catalyses L-tyrosine = 3-amino-3-(4-hydroxyphenyl)propanoate. It catalyses the reaction L-tyrosine = (E)-4-coumarate + NH4(+). Its function is as follows. Has aminomutase and, to a much lesser extent, ammonia-lyase activity. Primarily, catalyzes the rearrangement of L-tyrosine to S-beta-tyrosine, which is probably incorporated into secondary metabolite myxovalargin. The aminomutase activity exclusively produces S-beta-tyrosine. The polypeptide is Tyrosine 2,3-aminomutase (Myxococcus sp. (strain Mx-B0)).